We begin with the raw amino-acid sequence, 235 residues long: Leucyl/phenylalanyl-tRNA--protein transferase (235 aa).

Belongs to the L/F-transferase family.

It is found in the cytoplasm. It catalyses the reaction N-terminal L-lysyl-[protein] + L-leucyl-tRNA(Leu) = N-terminal L-leucyl-L-lysyl-[protein] + tRNA(Leu) + H(+). The enzyme catalyses N-terminal L-arginyl-[protein] + L-leucyl-tRNA(Leu) = N-terminal L-leucyl-L-arginyl-[protein] + tRNA(Leu) + H(+). It carries out the reaction L-phenylalanyl-tRNA(Phe) + an N-terminal L-alpha-aminoacyl-[protein] = an N-terminal L-phenylalanyl-L-alpha-aminoacyl-[protein] + tRNA(Phe). Functions in the N-end rule pathway of protein degradation where it conjugates Leu, Phe and, less efficiently, Met from aminoacyl-tRNAs to the N-termini of proteins containing an N-terminal arginine or lysine. The polypeptide is Leucyl/phenylalanyl-tRNA--protein transferase (Azoarcus sp. (strain BH72)).